The primary structure comprises 427 residues: Gamma-glutamyl phosphate reductase (427 aa).

The protein belongs to the gamma-glutamyl phosphate reductase family.

It localises to the cytoplasm. It catalyses the reaction L-glutamate 5-semialdehyde + phosphate + NADP(+) = L-glutamyl 5-phosphate + NADPH + H(+). It functions in the pathway amino-acid biosynthesis; L-proline biosynthesis; L-glutamate 5-semialdehyde from L-glutamate: step 2/2. Its function is as follows. Catalyzes the NADPH-dependent reduction of L-glutamate 5-phosphate into L-glutamate 5-semialdehyde and phosphate. The product spontaneously undergoes cyclization to form 1-pyrroline-5-carboxylate. This chain is Gamma-glutamyl phosphate reductase, found in Streptomyces griseus subsp. griseus (strain JCM 4626 / CBS 651.72 / NBRC 13350 / KCC S-0626 / ISP 5235).